The sequence spans 211 residues: Small ribosomal subunit protein uS3 (211 aa).

One can recognise a KH type-2 domain in the interval 38–106; that stretch reads LRKFIKKAFY…NIELNIIEVK (69 aa).

It belongs to the universal ribosomal protein uS3 family. Part of the 30S ribosomal subunit. Forms a tight complex with proteins S10 and S14.

Functionally, binds the lower part of the 30S subunit head. Binds mRNA in the 70S ribosome, positioning it for translation. The polypeptide is Small ribosomal subunit protein uS3 (Ehrlichia ruminantium (strain Gardel)).